The chain runs to 161 residues: Cyclic pyranopterin monophosphate synthase (161 aa).

Residues 75 to 77 (LCH) and 113 to 114 (ME) contribute to the substrate site. The active site involves aspartate 128.

This sequence belongs to the MoaC family. Homohexamer; trimer of dimers.

The catalysed reaction is (8S)-3',8-cyclo-7,8-dihydroguanosine 5'-triphosphate = cyclic pyranopterin phosphate + diphosphate. Its pathway is cofactor biosynthesis; molybdopterin biosynthesis. Its function is as follows. Catalyzes the conversion of (8S)-3',8-cyclo-7,8-dihydroguanosine 5'-triphosphate to cyclic pyranopterin monophosphate (cPMP). In Enterobacter sp. (strain 638), this protein is Cyclic pyranopterin monophosphate synthase.